Here is a 388-residue protein sequence, read N- to C-terminus: Calreticulin (388 aa).

An N-terminal signal peptide occupies residues 1-17; the sequence is MQLSLLVGLVCFSAINA. A disulfide bridge connects residues Cys103 and Cys135. An alpha-D-glucoside is bound by residues Tyr107, Lys109, Tyr126, and Asp133. 7 consecutive repeat copies span residues 189-200, 208-219, 225-236, 242-253, 257-267, 271-281, and 285-295. The interval 189–253 is 4 X approximate repeats; the sequence is AESGELEADW…DAKKPEDWDD (65 aa). The tract at residues 193 to 282 is disordered; sequence ELEADWDFLP…WKPKQKKNPA (90 aa). Residues 205–215 show a composition bias toward basic and acidic residues; it reads KIKDPDAKKPE. The segment covering 216–227 has biased composition (acidic residues); that stretch reads DWDEREFIDDED. The span at 228–249 shows a compositional bias: basic and acidic residues; it reads DKKPEDWDKPEHIPDPDAKKPE. Residues 250-259 are compositionally biased toward acidic residues; the sequence is DWDDEMDGEW. The 3 X approximate repeats stretch occupies residues 257–295; sequence GEWEPPMVDNPEYKGEWKPKQKKNPAYKGKWIHPEIEIP. Residue Asp315 participates in an alpha-D-glucoside binding. The tract at residues 349–388 is disordered; the sequence is REGEKKKGKKTKKQKKKEKNEKIKKEKMKKRKRANRKKKK. Composition is skewed to basic residues over residues 354 to 365 and 373 to 388; these read KKGKKTKKQKKK and KEKM…KKKK.

It belongs to the calreticulin family.

Its subcellular location is the endoplasmic reticulum lumen. Its function is as follows. Molecular calcium-binding chaperone promoting folding, oligomeric assembly and quality control in the ER via the calreticulin/calnexin cycle. This lectin may interact transiently with almost all of the monoglucosylated glycoproteins that are synthesized in the ER. The chain is Calreticulin (crt-1) from Onchocerca volvulus.